The following is a 100-amino-acid chain: Ubiquitin-related modifier 1 homolog (100 aa).

Position 100 is a 1-thioglycine (G100). G100 participates in a covalent cross-link: Glycyl lysine isopeptide (Gly-Lys) (interchain with K-? in acceptor proteins).

It belongs to the URM1 family. C-terminal thiocarboxylation occurs in 2 steps, it is first acyl-adenylated (-COAMP) via the hesA/moeB/thiF part of the MOCS3 homolog, then thiocarboxylated (-COSH) via the rhodanese domain of the MOCS3 homolog.

Its subcellular location is the cytoplasm. It participates in tRNA modification; 5-methoxycarbonylmethyl-2-thiouridine-tRNA biosynthesis. Functionally, acts as a sulfur carrier required for 2-thiolation of mcm(5)S(2)U at tRNA wobble positions of cytosolic tRNA(Lys), tRNA(Glu) and tRNA(Gln). Serves as sulfur donor in tRNA 2-thiolation reaction by being thiocarboxylated (-COSH) at its C-terminus by MOCS3. The sulfur is then transferred to tRNA to form 2-thiolation of mcm(5)S(2)U. Also acts as a ubiquitin-like protein (UBL) that is covalently conjugated via an isopeptide bond to lysine residues of target proteins. The thiocarboxylated form serves as substrate for conjugation and oxidative stress specifically induces the formation of UBL-protein conjugates. The sequence is that of Ubiquitin-related modifier 1 homolog from Oryza sativa subsp. japonica (Rice).